Consider the following 334-residue polypeptide: Probable aminoacyl tRNA synthase complex-interacting multifunctional protein 2 (334 aa).

The GST C-terminal domain maps to 280–327; that stretch reads LDKRLQKQQYFGGSQMSVADVGVYSSLIRMPAVTEKDLTPALVAWRKR.

Component of the aminoacyl-tRNA synthase complex which is comprised of a bifunctional glutamyl-prolyl-tRNA synthase, the monospecific isoleucyl, leucyl, glutaminyl, methionyl, lysyl, arginyl and aspartyl-tRNA synthases, and three auxiliary proteins.

Its subcellular location is the cytoplasm. The protein resides in the cytosol. It localises to the nucleus. Required for assembly and stability of the aminoacyl-tRNA synthase complex. This chain is Probable aminoacyl tRNA synthase complex-interacting multifunctional protein 2, found in Drosophila melanogaster (Fruit fly).